Reading from the N-terminus, the 255-residue chain is Electron transfer flavoprotein subunit beta (255 aa).

Alanine 2 bears the N-acetylalanine mark. AMP is bound by residues alanine 9, 39-42, cysteine 66, and 123-134; these read NPFC and GKQAIDDDCNQT. A recognition loop region spans residues 183 to 205; it reads ADLRLNEPRYATLPNIMKAKKKK. Position 200 is an N6,N6,N6-trimethyllysine; by ETFBKMT; alternate (lysine 200). Residue lysine 200 is modified to N6-acetyllysine; alternate. Lysine 200 is subject to N6-methyllysine; alternate. Residue lysine 203 is modified to N6,N6,N6-trimethyllysine; by ETFBKMT. Lysine 210 carries the N6-acetyllysine; alternate modification. Lysine 210 is modified (N6-succinyllysine; alternate). Serine 223 and serine 226 each carry phosphoserine. Lysine 238 carries the post-translational modification N6-acetyllysine. N6-acetyllysine; alternate is present on lysine 248. Lysine 248 carries the N6-succinyllysine; alternate modification.

It belongs to the ETF beta-subunit/FixA family. In terms of assembly, heterodimer composed of ETFA and ETFB. Identified in a complex that contains ETFA, ETFB and ETFRF1. Interacts with ACADM. Post-translationally, methylated. Trimethylation at Lys-200 and Lys-203 may negatively regulate the activity in electron transfer from acyl-CoA dehydrogenases.

The protein localises to the mitochondrion matrix. Functionally, heterodimeric electron transfer flavoprotein that accepts electrons from several mitochondrial dehydrogenases, including acyl-CoA dehydrogenases, glutaryl-CoA and sarcosine dehydrogenase. It transfers the electrons to the main mitochondrial respiratory chain via ETF-ubiquinone oxidoreductase. Required for normal mitochondrial fatty acid oxidation and normal amino acid metabolism. ETFB binds an AMP molecule that probably has a purely structural role. The sequence is that of Electron transfer flavoprotein subunit beta from Pongo abelii (Sumatran orangutan).